Consider the following 123-residue polypeptide: Fluoride-specific ion channel FluC (123 aa).

4 consecutive transmembrane segments (helical) span residues I5–G25, I35–L55, I67–T87, and F100–L120. Residues G75 and S78 each contribute to the Na(+) site.

The protein belongs to the fluoride channel Fluc/FEX (TC 1.A.43) family.

Its subcellular location is the cell membrane. The enzyme catalyses fluoride(in) = fluoride(out). Its activity is regulated as follows. Na(+) is not transported, but it plays an essential structural role and its presence is essential for fluoride channel function. In terms of biological role, fluoride-specific ion channel. Important for reducing fluoride concentration in the cell, thus reducing its toxicity. The protein is Fluoride-specific ion channel FluC of Pyrococcus horikoshii (strain ATCC 700860 / DSM 12428 / JCM 9974 / NBRC 100139 / OT-3).